Here is a 476-residue protein sequence, read N- to C-terminus: MHQEIQSEVVIIGSGPAGYSAAFRCADLGLETVLIEHQERLGGVCLNVGCIPSKSLLHIAKIIKDASELSESGVFFNKPIIDIKKINNWKEKIIKKLTTGLSNMGEKRKVRIVQGKALFNTDHSVLVKNKKNDFTIFFKHAIIATGSKPIKIPSLPNEDNRIWNSTDALSLKSIPNRFLIIGGGIIGLEMATIYSALGSKVDIVDRFNAFLPSVDKDITDIYIKSIKKRFKLLLNTHVKSVEKSKDNDLIVKIAEENSDENVCCYDNILVAIGRSPNVDFLGLEKIGLKLNESGFIEINQQLKTNISHIYAIGDVTGFPMLAHKAVQQAHIAAEVISGKKHYFEPKVIPSVAYTDPEIAWVGLSEKEAENNDIDYEVSLFPWSASGRAHASNCTLGMTKLIFNKNTNKIIGGSIIGTNASELISEIGLAIEMGSDAEDISLTIHPHPTLSESISLASEVFQGTITDLLNLKKSLLN.

FAD is bound by residues 36 to 45 (EHQERLGGVC), Lys-54, and Ala-117. Cysteines 45 and 50 form a disulfide. NAD(+) is bound by residues 182-186 (GGGII), Asp-205, Val-238, and 271-274 (AIGR). FAD-binding residues include Asp-314 and Ala-322. The active-site Proton acceptor is His-446.

It belongs to the class-I pyridine nucleotide-disulfide oxidoreductase family. In terms of assembly, homodimer. The cofactor is FAD.

It is found in the cytoplasm. It carries out the reaction N(6)-[(R)-dihydrolipoyl]-L-lysyl-[protein] + NAD(+) = N(6)-[(R)-lipoyl]-L-lysyl-[protein] + NADH + H(+). Functionally, lipoamide dehydrogenase is a component of the alpha-ketoacid dehydrogenase complexes. In Buchnera aphidicola subsp. Schizaphis graminum (strain Sg), this protein is Dihydrolipoyl dehydrogenase (lpdA).